We begin with the raw amino-acid sequence, 150 residues long: uncharacterized protein (150 aa).

One can recognise an HTH marR-type domain in the interval 1–133 (MNDILREIGM…ISALLHRVRK (133 aa)). The H-T-H motif DNA-binding region spans 47-70 (QEKLAEMIKVDRTTAARAIKKLEM).

This is an uncharacterized protein from Bacillus subtilis (strain 168).